The following is a 385-amino-acid chain: 8-amino-7-oxononanoate synthase (385 aa).

Residue arginine 21 coordinates substrate. 108–109 is a binding site for pyridoxal 5'-phosphate; the sequence is GF. Substrate is bound at residue histidine 133. Pyridoxal 5'-phosphate-binding residues include serine 179, histidine 207, and threonine 233. Lysine 236 is modified (N6-(pyridoxal phosphate)lysine). Threonine 352 provides a ligand contact to substrate.

It belongs to the class-II pyridoxal-phosphate-dependent aminotransferase family. BioF subfamily. Homodimer. Pyridoxal 5'-phosphate is required as a cofactor.

The enzyme catalyses 6-carboxyhexanoyl-[ACP] + L-alanine + H(+) = (8S)-8-amino-7-oxononanoate + holo-[ACP] + CO2. It functions in the pathway cofactor biosynthesis; biotin biosynthesis. Its function is as follows. Catalyzes the decarboxylative condensation of pimeloyl-[acyl-carrier protein] and L-alanine to produce 8-amino-7-oxononanoate (AON), [acyl-carrier protein], and carbon dioxide. The sequence is that of 8-amino-7-oxononanoate synthase from Pseudescherichia vulneris (Escherichia vulneris).